A 680-amino-acid polypeptide reads, in one-letter code: MTNPLLTPFELPPFSKILPEHVVPAVTKALNDCRENVERVVAQGAPYTWENLCQPLAEVDDVLGRIFSPVSHLNSVKNSPELREAYEQTLPLLSEYSTWVGQHEGLYKAYRDLRDGDHYATLNTAQKKAVDNALRDFELSGIGLPKEKQQRYGEIATRLSELGNQYSNNVLDATMGWTKLVTDEAELAGMPESALAAAKAQAEAKELEGYLLTLDIPSYLPVMTYCDNQALREEMYRAYSTRASDQGPNAGKWDNSKVMEEILALRHELAQLLGFENYAFKSLATKMAENPQQVLDFLTDLAKRARPQGEKELAQLRAFAKAEFGVDELQPWDIAYYSEKQKQHLYSISDEQLRPYFPENKAVNGLFEVVKRIYGITAKERKDVDVWHPDVRFFELYDENNELRGSFYLDLYARENKRGGAWMDDCVGQMRKADGSLQKPVAYLTCNFNRPVNGKPALFTHDEVITLFHEFGHGLHHMLTRIETAGVSGISGVPWDAVELPSQFMENWCWEPEALAFISGHYETGEPLPKELLDKMLAAKNYQAALFILRQLEFGLFDFRLHAEFRPDQGAKILETLAEIKKLVAVVPSPSWGRFPHAFSHIFAGGYAAGYYSYLWADVLAADAFSRFEEEGIFNRETGQSFLDNILSRGGSEEPMDLFKRFRGREPQLDAMLEHYGIKG.

Histidine 469 contributes to the Zn(2+) binding site. Residue glutamate 470 is part of the active site. 2 residues coordinate Zn(2+): histidine 473 and histidine 476.

The protein belongs to the peptidase M3 family. Requires Zn(2+) as cofactor.

It catalyses the reaction Hydrolysis of oligopeptides, with broad specificity. Gly or Ala commonly occur as P1 or P1' residues, but more distant residues are also important, as is shown by the fact that Z-Gly-Pro-Gly-|-Gly-Pro-Ala is cleaved, but not Z-(Gly)(5).. In terms of biological role, may play a specific role in the degradation of signal peptides after they are released from precursor forms of secreted proteins. Can cleave N-acetyl-L-Ala(4). This is Oligopeptidase A (prlC) from Escherichia coli (strain K12).